An 870-amino-acid polypeptide reads, in one-letter code: Probable inorganic carbon transporter subunit DabA (870 aa).

Zn(2+) contacts are provided by C381, D383, H564, and C579.

This sequence belongs to the inorganic carbon transporter (TC 9.A.2) DabA family. As to quaternary structure, forms a complex with DabB. Requires Zn(2+) as cofactor.

It localises to the cell membrane. Part of an energy-coupled inorganic carbon pump. The sequence is that of Probable inorganic carbon transporter subunit DabA from Geobacillus kaustophilus (strain HTA426).